We begin with the raw amino-acid sequence, 157 residues long: SsrA-binding protein (157 aa).

The protein belongs to the SmpB family.

The protein resides in the cytoplasm. Its function is as follows. Required for rescue of stalled ribosomes mediated by trans-translation. Binds to transfer-messenger RNA (tmRNA), required for stable association of tmRNA with ribosomes. tmRNA and SmpB together mimic tRNA shape, replacing the anticodon stem-loop with SmpB. tmRNA is encoded by the ssrA gene; the 2 termini fold to resemble tRNA(Ala) and it encodes a 'tag peptide', a short internal open reading frame. During trans-translation Ala-aminoacylated tmRNA acts like a tRNA, entering the A-site of stalled ribosomes, displacing the stalled mRNA. The ribosome then switches to translate the ORF on the tmRNA; the nascent peptide is terminated with the 'tag peptide' encoded by the tmRNA and targeted for degradation. The ribosome is freed to recommence translation, which seems to be the essential function of trans-translation. This Limosilactobacillus reuteri (strain DSM 20016) (Lactobacillus reuteri) protein is SsrA-binding protein.